A 274-amino-acid chain; its full sequence is 2,3,4,5-tetrahydropyridine-2,6-dicarboxylate N-succinyltransferase (274 aa).

Substrate-binding residues include Arg104 and Asp141.

It belongs to the transferase hexapeptide repeat family. As to quaternary structure, homotrimer.

It localises to the cytoplasm. The catalysed reaction is (S)-2,3,4,5-tetrahydrodipicolinate + succinyl-CoA + H2O = (S)-2-succinylamino-6-oxoheptanedioate + CoA. Its pathway is amino-acid biosynthesis; L-lysine biosynthesis via DAP pathway; LL-2,6-diaminopimelate from (S)-tetrahydrodipicolinate (succinylase route): step 1/3. The polypeptide is 2,3,4,5-tetrahydropyridine-2,6-dicarboxylate N-succinyltransferase (Shewanella oneidensis (strain ATCC 700550 / JCM 31522 / CIP 106686 / LMG 19005 / NCIMB 14063 / MR-1)).